The primary structure comprises 212 residues: Phosphoribosylformylglycinamidine synthase subunit PurQ (212 aa).

A Glutamine amidotransferase type-1 domain is found at 2–212; the sequence is RIAVLKFPGT…WLGLISWLRR (211 aa). Cysteine 85 functions as the Nucleophile in the catalytic mechanism. Active-site residues include histidine 183, glutamate 185, and histidine 191.

In terms of assembly, part of the FGAM synthase complex composed of 1 PurL, 1 PurQ and 2 PurS subunits.

The protein resides in the cytoplasm. It carries out the reaction N(2)-formyl-N(1)-(5-phospho-beta-D-ribosyl)glycinamide + L-glutamine + ATP + H2O = 2-formamido-N(1)-(5-O-phospho-beta-D-ribosyl)acetamidine + L-glutamate + ADP + phosphate + H(+). It catalyses the reaction L-glutamine + H2O = L-glutamate + NH4(+). It participates in purine metabolism; IMP biosynthesis via de novo pathway; 5-amino-1-(5-phospho-D-ribosyl)imidazole from N(2)-formyl-N(1)-(5-phospho-D-ribosyl)glycinamide: step 1/2. Its function is as follows. Part of the phosphoribosylformylglycinamidine synthase complex involved in the purines biosynthetic pathway. Catalyzes the ATP-dependent conversion of formylglycinamide ribonucleotide (FGAR) and glutamine to yield formylglycinamidine ribonucleotide (FGAM) and glutamate. The FGAM synthase complex is composed of three subunits. PurQ produces an ammonia molecule by converting glutamine to glutamate. PurL transfers the ammonia molecule to FGAR to form FGAM in an ATP-dependent manner. PurS interacts with PurQ and PurL and is thought to assist in the transfer of the ammonia molecule from PurQ to PurL. The sequence is that of Phosphoribosylformylglycinamidine synthase subunit PurQ from Pyrobaculum aerophilum (strain ATCC 51768 / DSM 7523 / JCM 9630 / CIP 104966 / NBRC 100827 / IM2).